A 379-amino-acid chain; its full sequence is Putative glutamate--cysteine ligase 2 (379 aa).

This sequence belongs to the glutamate--cysteine ligase type 2 family. YbdK subfamily.

The catalysed reaction is L-cysteine + L-glutamate + ATP = gamma-L-glutamyl-L-cysteine + ADP + phosphate + H(+). ATP-dependent carboxylate-amine ligase which exhibits weak glutamate--cysteine ligase activity. This is Putative glutamate--cysteine ligase 2 from Roseiflexus castenholzii (strain DSM 13941 / HLO8).